The primary structure comprises 452 residues: Chromosomal replication initiator protein DnaA (452 aa).

A domain I, interacts with DnaA modulators region spans residues 1 to 85; that stretch reads MSTTAWQKCL…IEVGSKPVEA (85 aa). Residues 85–115 form a domain II region; the sequence is AVDTPAETIVTSSSTAPLKSAPKKAVDYKSS. A domain III, AAA+ region region spans residues 116 to 332; it reads HLNKKFVFDS…GALRRVIANA (217 aa). Positions 160, 162, 163, and 164 each coordinate ATP. Residues 333-452 form a domain IV, binds dsDNA region; that stretch reads HFTGKPITIE…YKNLMRILSS (120 aa).

The protein belongs to the DnaA family. As to quaternary structure, oligomerizes as a right-handed, spiral filament on DNA at oriC.

Its subcellular location is the cytoplasm. In terms of biological role, plays an essential role in the initiation and regulation of chromosomal replication. ATP-DnaA binds to the origin of replication (oriC) to initiate formation of the DNA replication initiation complex once per cell cycle. Binds the DnaA box (a 9 base pair repeat at the origin) and separates the double-stranded (ds)DNA. Forms a right-handed helical filament on oriC DNA; dsDNA binds to the exterior of the filament while single-stranded (ss)DNA is stabiized in the filament's interior. The ATP-DnaA-oriC complex binds and stabilizes one strand of the AT-rich DNA unwinding element (DUE), permitting loading of DNA polymerase. After initiation quickly degrades to an ADP-DnaA complex that is not apt for DNA replication. Binds acidic phospholipids. The protein is Chromosomal replication initiator protein DnaA of Legionella pneumophila (strain Paris).